We begin with the raw amino-acid sequence, 1210 residues long: uncharacterized protein (1210 aa).

This sequence to E.coli molybdate metabolism regulator (MolR).

This is an uncharacterized protein from Escherichia coli (strain K12).